Consider the following 218-residue polypeptide: Glutathione S-transferase PM239X14 (218 aa).

A GST N-terminal domain is found at 2 to 85 (VTVKLYGMAY…YLVAKYGKGS (84 aa)). Glutathione contacts are provided by residues 12–13 (ST), 41–42 (HK), 55–56 (VI), and 69–70 (ES). Residues 93-218 (DPKAYGLFEQ…LLRNSSKEFM (126 aa)) form the GST C-terminal domain.

This sequence belongs to the GST superfamily. Phi family. Expressed in vegetative rosettes.

Its subcellular location is the cytoplasm. The protein resides in the cytosol. It catalyses the reaction RX + glutathione = an S-substituted glutathione + a halide anion + H(+). Functionally, specifically catalyzes the conjugation of synthetic 1-chloro-2,4-ditrobenzene to GSH. Also functions as a glutathione peroxidase, converting linoleate oxidation products into their corresponding hydroxyacids. This enzyme may thus serve to protect the cell from oxygen toxicity as well as from exogenous toxins such as herbicides. The sequence is that of Glutathione S-transferase PM239X14 from Arabidopsis thaliana (Mouse-ear cress).